A 105-amino-acid polypeptide reads, in one-letter code: UPF0145 protein jk0060 (105 aa).

It belongs to the UPF0145 family.

The polypeptide is UPF0145 protein jk0060 (Corynebacterium jeikeium (strain K411)).